Here is a 368-residue protein sequence, read N- to C-terminus: Chorismate synthase (368 aa).

Residue Arg-46 coordinates NADP(+). Residues 124–126 (RAS), Gly-284, 299–303 (KPTPS), and Arg-326 each bind FMN.

The protein belongs to the chorismate synthase family. Requires FMNH2 as cofactor.

The enzyme catalyses 5-O-(1-carboxyvinyl)-3-phosphoshikimate = chorismate + phosphate. It functions in the pathway metabolic intermediate biosynthesis; chorismate biosynthesis; chorismate from D-erythrose 4-phosphate and phosphoenolpyruvate: step 7/7. Catalyzes the anti-1,4-elimination of the C-3 phosphate and the C-6 proR hydrogen from 5-enolpyruvylshikimate-3-phosphate (EPSP) to yield chorismate, which is the branch point compound that serves as the starting substrate for the three terminal pathways of aromatic amino acid biosynthesis. This reaction introduces a second double bond into the aromatic ring system. In Pyrobaculum aerophilum (strain ATCC 51768 / DSM 7523 / JCM 9630 / CIP 104966 / NBRC 100827 / IM2), this protein is Chorismate synthase.